Reading from the N-terminus, the 432-residue chain is Asparagine--tRNA ligase (432 aa).

It belongs to the class-II aminoacyl-tRNA synthetase family. As to quaternary structure, homodimer.

The protein localises to the cytoplasm. The catalysed reaction is tRNA(Asn) + L-asparagine + ATP = L-asparaginyl-tRNA(Asn) + AMP + diphosphate + H(+). This Lactobacillus helveticus (strain DPC 4571) protein is Asparagine--tRNA ligase.